A 288-amino-acid polypeptide reads, in one-letter code: Shikimate dehydrogenase (NADP(+)) (288 aa).

Shikimate contacts are provided by residues 15–17 (SKS) and Thr64. Lys68 (proton acceptor) is an active-site residue. NADP(+) is bound at residue Glu83. Shikimate contacts are provided by Asn92 and Asp117. NADP(+) contacts are provided by residues 141–145 (GAGGA), 165–170 (NRTLSK), and Met232. Tyr234 is a shikimate binding site. Residue Gly254 coordinates NADP(+).

It belongs to the shikimate dehydrogenase family. Homodimer.

It carries out the reaction shikimate + NADP(+) = 3-dehydroshikimate + NADPH + H(+). It functions in the pathway metabolic intermediate biosynthesis; chorismate biosynthesis; chorismate from D-erythrose 4-phosphate and phosphoenolpyruvate: step 4/7. Functionally, involved in the biosynthesis of the chorismate, which leads to the biosynthesis of aromatic amino acids. Catalyzes the reversible NADPH linked reduction of 3-dehydroshikimate (DHSA) to yield shikimate (SA). The protein is Shikimate dehydrogenase (NADP(+)) of Psychrobacter arcticus (strain DSM 17307 / VKM B-2377 / 273-4).